The primary structure comprises 88 residues: MALKERIGTVVSDKMDKTVVVAVINRYPHPTYKKIVSRTTRYKAHDPENTCVTGDRVKIRETRPLSAQKRWAIEEILNKTNQAKEVKK.

It belongs to the universal ribosomal protein uS17 family. In terms of assembly, part of the 30S ribosomal subunit.

Its function is as follows. One of the primary rRNA binding proteins, it binds specifically to the 5'-end of 16S ribosomal RNA. This chain is Small ribosomal subunit protein uS17, found in Prochlorococcus marinus (strain MIT 9215).